The following is a 295-amino-acid chain: Glutamyl-Q tRNA(Asp) synthetase (295 aa).

L-glutamate-binding positions include 5–9 (RFAPS) and Glu41. Residues 8–18 (PSPTGLLHIGS) carry the 'HIGH' region motif. Residues Cys97, Cys99, Tyr117, and Cys121 each coordinate Zn(2+). L-glutamate is bound by residues Tyr178 and Arg196. The short motif at 234–238 (KWSKQ) is the 'KMSKS' region element. ATP is bound at residue Lys237.

It belongs to the class-I aminoacyl-tRNA synthetase family. GluQ subfamily. Requires Zn(2+) as cofactor.

Catalyzes the tRNA-independent activation of glutamate in presence of ATP and the subsequent transfer of glutamate onto a tRNA(Asp). Glutamate is transferred on the 2-amino-5-(4,5-dihydroxy-2-cyclopenten-1-yl) moiety of the queuosine in the wobble position of the QUC anticodon. The chain is Glutamyl-Q tRNA(Asp) synthetase from Neisseria meningitidis serogroup B (strain ATCC BAA-335 / MC58).